A 177-amino-acid chain; its full sequence is Alkyl hydroperoxide reductase AhpD (177 aa).

The active-site Proton donor is the Cys-130. An intrachain disulfide couples Cys-130 to Cys-133. Residue Cys-133 is the Cysteine sulfenic acid (-SOH) intermediate of the active site.

Belongs to the AhpD family. As to quaternary structure, homotrimer.

It carries out the reaction N(6)-[(R)-dihydrolipoyl]-L-lysyl-[lipoyl-carrier protein] + a hydroperoxide = N(6)-[(R)-lipoyl]-L-lysyl-[lipoyl-carrier protein] + an alcohol + H2O. Antioxidant protein with alkyl hydroperoxidase activity. Required for the reduction of the AhpC active site cysteine residues and for the regeneration of the AhpC enzyme activity. The polypeptide is Alkyl hydroperoxide reductase AhpD (Mycobacterium bovis (strain ATCC BAA-935 / AF2122/97)).